The following is a 237-amino-acid chain: U2 small nuclear ribonucleoprotein A' (237 aa).

LRR repeat units lie at residues 53-74, 75-95, and 97-118; these read RTNI…GHND, TVHT…SRLP, and YLVN…QGLR. The LRRCT domain occupies 132–170; sequence NVICHKEQYRETVIALCPQLAVLDGERVRQAERQAAPQN. The disordered stretch occupies residues 161-182; that stretch reads QAERQAAPQNEKTDTPTEGPQP.

This sequence belongs to the U2 small nuclear ribonucleoprotein A family. Associated with the spliceosome.

The protein resides in the nucleus. Its function is as follows. Involved in pre-mRNA splicing. The chain is U2 small nuclear ribonucleoprotein A' (LEA1) from Eremothecium gossypii (strain ATCC 10895 / CBS 109.51 / FGSC 9923 / NRRL Y-1056) (Yeast).